A 323-amino-acid polypeptide reads, in one-letter code: Mycothiol acetyltransferase (323 aa).

E44 provides a ligand contact to 1D-myo-inositol 2-(L-cysteinylamino)-2-deoxy-alpha-D-glucopyranoside. N-acetyltransferase domains lie at 77–176 (GQDL…VSLR) and 173–323 (VSLR…VKEG). Acetyl-CoA is bound at residue 98–100 (IAV). 1D-myo-inositol 2-(L-cysteinylamino)-2-deoxy-alpha-D-glucopyranoside-binding residues include E200, K240, and E253. Acetyl-CoA-binding positions include 257-259 (VGV) and 264-270 (QGSGLGK). Y291 serves as a coordination point for 1D-myo-inositol 2-(L-cysteinylamino)-2-deoxy-alpha-D-glucopyranoside.

The protein belongs to the acetyltransferase family. MshD subfamily. In terms of assembly, monomer.

It catalyses the reaction 1D-myo-inositol 2-(L-cysteinylamino)-2-deoxy-alpha-D-glucopyranoside + acetyl-CoA = mycothiol + CoA + H(+). In terms of biological role, catalyzes the transfer of acetyl from acetyl-CoA to desacetylmycothiol (Cys-GlcN-Ins) to form mycothiol. The chain is Mycothiol acetyltransferase from Pseudarthrobacter chlorophenolicus (strain ATCC 700700 / DSM 12829 / CIP 107037 / JCM 12360 / KCTC 9906 / NCIMB 13794 / A6) (Arthrobacter chlorophenolicus).